A 154-amino-acid polypeptide reads, in one-letter code: MIIKNLQEFYRLLIPNAPLIAIDYGSKKLGIALSNQELSIAMPLNTITEINTKIVITVLLNIIEKYKVCGVIIGLPIDMSGAVTEQTNIVMKFAEELAKSINLPIYLQDERLTTKAANNLLKSFGVKRKDRNNNDDAVAASMILETVLDSIKNI.

It belongs to the YqgF nuclease family.

Its subcellular location is the cytoplasm. Could be a nuclease involved in processing of the 5'-end of pre-16S rRNA. The sequence is that of Putative pre-16S rRNA nuclease from Rickettsia rickettsii (strain Iowa).